A 201-amino-acid chain; its full sequence is 3-isopropylmalate dehydratase small subunit (201 aa).

This sequence belongs to the LeuD family. LeuD type 1 subfamily. In terms of assembly, heterodimer of LeuC and LeuD.

The enzyme catalyses (2R,3S)-3-isopropylmalate = (2S)-2-isopropylmalate. It participates in amino-acid biosynthesis; L-leucine biosynthesis; L-leucine from 3-methyl-2-oxobutanoate: step 2/4. Functionally, catalyzes the isomerization between 2-isopropylmalate and 3-isopropylmalate, via the formation of 2-isopropylmaleate. In Shigella dysenteriae serotype 1 (strain Sd197), this protein is 3-isopropylmalate dehydratase small subunit.